A 346-amino-acid polypeptide reads, in one-letter code: E3 ubiquitin-protein ligase ARK2C (346 aa).

2 disordered regions span residues Pro-23 to Gly-76 and Pro-267 to Ser-288. Residues Phe-266–His-268 form a ubiquitin binding region. A compositionally biased stretch (basic and acidic residues) spans Pro-275–Glu-284. Cys-294 and Cys-297 together coordinate Zn(2+). The RING-type; atypical zinc-finger motif lies at Cys-294–Arg-335. Positions Arg-309–Met-313 are ubiquitin binding. Zn(2+) contacts are provided by His-317 and Cys-320.

The protein belongs to the Arkadia family. As to quaternary structure, monomer; binding to the ubiquitin-conjugating enzyme E2 does not trigger homodimerization.

The protein localises to the nucleus. The catalysed reaction is S-ubiquitinyl-[E2 ubiquitin-conjugating enzyme]-L-cysteine + [acceptor protein]-L-lysine = [E2 ubiquitin-conjugating enzyme]-L-cysteine + N(6)-ubiquitinyl-[acceptor protein]-L-lysine.. Its activity is regulated as follows. Binds free ubiquitin non-covalently via its RING-type zinc finger. Ubiquitin-binding leads to enhance the E3 ubiquitin-protein ligase activity by stabilizing the ubiquitin-conjugating enzyme E2 (donor ubiquitin) in the 'closed' conformation and activating ubiquitin transfer. Functionally, E3 ubiquitin-protein ligase that acts as a regulator of motor axon elongation. Required for efficient motor axon extension in the dorsal forelimb by enhancing the transcriptional responses of the SMAD1/SMAD5/SMAD8 effectors, which are activated downstream of BMP. Acts by mediating ubiquitination and degradation of SMAD inhibitors such as SMAD6, SMAD7, SKI and SNON isoform of SKIL. The sequence is that of E3 ubiquitin-protein ligase ARK2C from Homo sapiens (Human).